A 570-amino-acid polypeptide reads, in one-letter code: Glutamate--tRNA ligase (570 aa).

A 'HIGH' region motif is present at residues 105–115; that stretch reads PNPDGAFHLGN.

It belongs to the class-I aminoacyl-tRNA synthetase family. Glutamate--tRNA ligase type 2 subfamily.

Its subcellular location is the cytoplasm. It catalyses the reaction tRNA(Glu) + L-glutamate + ATP = L-glutamyl-tRNA(Glu) + AMP + diphosphate. Functionally, catalyzes the attachment of glutamate to tRNA(Glu) in a two-step reaction: glutamate is first activated by ATP to form Glu-AMP and then transferred to the acceptor end of tRNA(Glu). This Pyrococcus horikoshii (strain ATCC 700860 / DSM 12428 / JCM 9974 / NBRC 100139 / OT-3) protein is Glutamate--tRNA ligase.